The chain runs to 399 residues: Subtilisin-like protease CPC735_033790 (399 aa).

The N-terminal stretch at 1–20 (MGFLSSAILLLITAFPAAQA) is a signal peptide. Positions 21 to 117 (GEMINAAAGA…VEPDRMVNIT (97 aa)) are excised as a propeptide. The 80-residue stretch at 37-116 (SYIVVMNEGI…YVEPDRMVNI (80 aa)) folds into the Inhibitor I9 domain. N-linked (GlcNAc...) asparagine glycosylation occurs at Asn-115. One can recognise a Peptidase S8 domain in the interval 127–399 (SYGLGRISNK…NRLLYNNSGV (273 aa)). Residues Asp-159 and His-190 each act as charge relay system in the active site. An N-linked (GlcNAc...) asparagine glycan is attached at Asn-251. Ser-345 serves as the catalytic Charge relay system. Residue Asn-395 is glycosylated (N-linked (GlcNAc...) asparagine).

This sequence belongs to the peptidase S8 family.

The protein resides in the secreted. Secreted subtilisin-like serine protease with keratinolytic activity that contributes to pathogenicity. In Coccidioides posadasii (strain C735) (Valley fever fungus), this protein is Subtilisin-like protease CPC735_033790.